The following is a 501-amino-acid chain: Aldehyde dehydrogenase, cytosolic 1 (501 aa).

Position 246–251 (Gly246–Gly251) interacts with NAD(+). Glu269 serves as the catalytic Proton acceptor. Cys303 serves as the catalytic Nucleophile.

This sequence belongs to the aldehyde dehydrogenase family. Homotetramer. In terms of tissue distribution, eye specific, with very high expression in the lens.

It localises to the cytoplasm. It catalyses the reaction an aldehyde + NAD(+) + H2O = a carboxylate + NADH + 2 H(+). It participates in alcohol metabolism; ethanol degradation; acetate from ethanol: step 2/2. Its function is as follows. Major component of the eye of elephant shrews, which in contrast to other mammals, possesses both a lens- and a non-lens class-1 aldehyde dehydrogenase 1. This eye-specific form is a structural protein of the lens and, in other part of the eye, serves as the major form of ALDH1. Can convert/oxidize retinaldehyde to retinoic acid. The sequence is that of Aldehyde dehydrogenase, cytosolic 1 (ALDH1) from Macroscelides proboscideus (Short-eared elephant shrew).